The following is a 235-amino-acid chain: Large ribosomal subunit protein uL1 (235 aa).

This sequence belongs to the universal ribosomal protein uL1 family. As to quaternary structure, part of the 50S ribosomal subunit.

Its function is as follows. Binds directly to 23S rRNA. The L1 stalk is quite mobile in the ribosome, and is involved in E site tRNA release. In terms of biological role, protein L1 is also a translational repressor protein, it controls the translation of the L11 operon by binding to its mRNA. The chain is Large ribosomal subunit protein uL1 from Synechococcus sp. (strain CC9902).